The sequence spans 149 residues: Endoribonuclease YbeY (149 aa).

Positions 112, 116, and 122 each coordinate Zn(2+).

This sequence belongs to the endoribonuclease YbeY family. Zn(2+) serves as cofactor.

It is found in the cytoplasm. Single strand-specific metallo-endoribonuclease involved in late-stage 70S ribosome quality control and in maturation of the 3' terminus of the 16S rRNA. The chain is Endoribonuclease YbeY from Methylibium petroleiphilum (strain ATCC BAA-1232 / LMG 22953 / PM1).